The sequence spans 1362 residues: MAYSYTEKKRIRKNFGKLPSVMDAPYLLSIQVDSYRTFLQDGKSPKNREDIGLQAAFRSVFPIESYSGNAALEFVEYGLGKPEFDVRECILRGSTYAAPMRVKIRLIIKDRETKSIKDVREQEVYMGEIPLMTENGTFVINGTERVIVSQLHRSPGVFFDHDKGKTHSSGKVLYSARIIPYRGSWLDFEFDAKDLVYVRIDRRRKLLASVILRALGYNNAQILDLFYEKVPVYLDFGSYQIDLVPERLRGEMAQFDIADNDGKVIVEQGKRINARHVRQMEASGLTKLSVPDEYLYERITAEDITLRDGDVIAANTLLSHEIMVKLAEGGVKQFNILYTNDIDHGSFVADTLRADTTMGREDALVEIYKVMRPGEPPTKEAAENLFNNLFFSSERYDLSPVGRMKFNRRLGRPYEVGTDQKSREVEGILSNEDIIDVLRTLVEIRNGKGEVDDIDHLGNRRVRSVGEMTENQFRVGLVRVERAVKERLSQAETDNLSPQDLINAKPVAAAIKEFFGSSQLSQFMDQNNPLSEITHKRRVSALGPGGLTRERAGFEVRDVHQTHYGRVCPIETPEGPNIGLINSLSVYAKANDFGFLETPYRKVVDGRVSDDVEYLSAIEEVGTVIAQADSAVDADGHLMEEMVSVRHQGEFVRMPPEKVTHMDVSAQQVVSVAASLIPFLEHDDANRALMGSNMQRQAVPTLLADKPLVGTGMEANVARDSGVCVIAKRGGMIEFVDASRVVIRVNEEEMIAGEAGVDIYNLIKYTRSNQNTCINQKVLVNLGDKVGRGDVLADGPSTDGGELALGQNMRVAFMTWNGYNYEDSILLSERVLQEDRLTSIHIQELSCVARDTKLGAEEITADIPNVGEAALSKLDESGIVYIGAEVTAGDILVGKVTPKGETQLTPEEKLLRAIFGEKAADVKDSSLRVPSGTKGTVIDVQVFTRDGLEKDDRALAIEKAQLDAYRKDLKEEYKIFEEAARERIVRLLNGQESNGGGTTKRGDKLSDDVLSGLELVDLLDIQPTDEGIAERLSQIQVFLKEKSAEIDEKFAEKKRKLATGDELTTGVLKVVKVYLAVKRRIQPGDKMAGRHGNKGVVSNILPVEDMPHDANGVPVDVVLNPLGVPSRMNVGQILETHLGLAAKGLGEQIDKMLQQQRTIAELRIFLDKIYNKVGGEQEELDTLTDEEILVLAGNLRKGVPLATPVFDGAEEGQIKELLELAELPRTGQQILFDGRTGEQFDRPVTVGYMYMLKLNHLVDDKMHARSTGSYSLVTQQPLGGKAQFGGQRFGEMEVWALEAYGAAYTLQEMLTVKSDDVEGRTRIYKNIVDGNHYMDPGMPESFNVLTKEIRSLGINIELKNGD.

Belongs to the RNA polymerase beta chain family. As to quaternary structure, the RNAP catalytic core consists of 2 alpha, 1 beta, 1 beta' and 1 omega subunit. When a sigma factor is associated with the core the holoenzyme is formed, which can initiate transcription.

It catalyses the reaction RNA(n) + a ribonucleoside 5'-triphosphate = RNA(n+1) + diphosphate. In terms of biological role, DNA-dependent RNA polymerase catalyzes the transcription of DNA into RNA using the four ribonucleoside triphosphates as substrates. The polypeptide is DNA-directed RNA polymerase subunit beta (Acinetobacter baylyi (strain ATCC 33305 / BD413 / ADP1)).